Consider the following 152-residue polypeptide: Acidic phospholipase A2 homolog taipoxin gamma chain (152 aa).

Positions 1 to 19 (MHPAHLLVLLAVCVSLLGS) are cleaved as a signal peptide. Cystine bridges form between C38/C104, C42/C46, C54/C151, C56/C72, C71/C132, C78/C125, C88/C118, and C111/C123. N97 carries N-linked (GlcNAc...) asparagine glycosylation.

Belongs to the phospholipase A2 family. Group I subfamily. D49 sub-subfamily. In terms of assembly, heterotrimer of alpha, beta, and gamma chains; non-covalently linked. Post-translationally, contains 0.9% fucose, 2.2% mannose, 4.2% N-acetyl-D-glucosamine, 3.5% galactose, and 3.8% N-acetyl-neuraminic acid (sialic acid). Expressed by the venom gland.

The protein localises to the secreted. Heterotrimer: Snake venom phospholipase A2 (PLA2) heterotrimer that acts as a potent presynaptic neurotoxin by blocking synaptic transmission and synaptic vesicle recycling. May act by binding in a calcium-dependent fashion to neurotonal pentraxin-1 (NPTX1) and neurotonal pentraxin-2 (NPTX2), but not to neuronal pentraxin receptor (NPTXR). Also binds to taipoxin-associated calcium binding protein 49 (RCN2), a protein localized in the lumen of endoplasmic reticulum. Functionally, monomer (gamma chain): Snake venom phospholipase A2 homolog that is neither toxic nor enzymatically active. Does not bind calcium. The polypeptide is Acidic phospholipase A2 homolog taipoxin gamma chain (Oxyuranus scutellatus scutellatus (Australian taipan)).